The chain runs to 2763 residues: Large tegument protein deneddylase (2763 aa).

The segment at 1–247 (MDIIPPIAVT…CDTYFTDEQY (247 aa)) is deubiquitination activity. A Peptidase C76 domain is found at 12-237 (AGVGSRNQFD…SSAVTLIYGS (226 aa)). Residues C32, D168, and H170 contribute to the active site. The interval 495–523 (LELFINLTILRLTGFVVENGTRTHHGATS) is interaction with inner tegument protein. The tract at residues 2456-2476 (VRPAQPAQPAQPAQPAQTVQP) is disordered. 5 consecutive repeat copies span residues 2458–2460 (PAQ), 2461–2463 (PAQ), 2464–2466 (PAQ), 2467–2469 (PAQ), and 2470–2472 (PAQ). The tract at residues 2458–2472 (PAQPAQPAQPAQPAQ) is 5 X 3 AA repeats of P-A-Q. Residues 2459 to 2476 (AQPAQPAQPAQPAQTVQP) show a composition bias toward low complexity.

It belongs to the herpesviridae large tegument protein family. In terms of assembly, interacts with host CUL1 and CUL4A; these interactions inhibit the E3 ligase activity of cullins. Interacts with inner tegument protein. Interacts with capsid vertex specific component CVC2. Interacts with the major capsid protein/MCP.

It is found in the virion tegument. Its subcellular location is the host cytoplasm. The protein resides in the host nucleus. The enzyme catalyses Thiol-dependent hydrolysis of ester, thioester, amide, peptide and isopeptide bonds formed by the C-terminal Gly of ubiquitin (a 76-residue protein attached to proteins as an intracellular targeting signal).. Functionally, large tegument protein that plays multiple roles in the viral cycle. During viral entry, remains associated with the capsid while most of the tegument is detached and participates in the capsid transport toward the host nucleus. Plays a role in the routing of the capsid at the nuclear pore complex and subsequent uncoating. Within the host nucleus, acts as a deneddylase and promotes the degradation of nuclear CRLs (cullin-RING ubiquitin ligases) and thereby stabilizes nuclear CRL substrates, while cytoplasmic CRLs remain unaffected. These modifications prevent host cell cycle S-phase progression and create a favorable environment allowing efficient viral genome replication. Participates later in the secondary envelopment of capsids. Indeed, plays a linker role for the association of the outer viral tegument to the capsids together with the inner tegument protein. The sequence is that of Large tegument protein deneddylase from Homo sapiens (Human).